A 426-amino-acid polypeptide reads, in one-letter code: MLLSKYFLPVLKEEPSEAQVTSHKLMLRSGMIRQQAAGIYTWLPLGLKVLKNIENIVRLNMNKAGALEVLMPCIQPAHLWMESGRFDNYGKEMLKFQDRHDNTLLFGPTNEDMITDIFRHNIKSYKDLPKNLYHIQWKFRDEIRPRFGVMRGREFLMKDAYSFDINEENAVKTYNQMYKAYINAFRDLGVFAIPVIADNGPIGGNLSHEFHIIAETGESTIYYDKKFKILKDNPDIDVEEIKSWYAAAEEKYEVNKLPISEQEITSSKGIEVGHIFYIGSKYSVNMNALINDEYGKLTPIEMSSYGIGISRLVAAIIEANCDEKGIIWPSSVAPFKVSLINLNIHDSKCVELAEMAYKELSDKNIEVLYDDTEARPGSKFATHDLIGSPHQIIIGPKKAANNIVELKDRKSGVIEDIEVGSLMSVL.

Belongs to the class-II aminoacyl-tRNA synthetase family. ProS type 2 subfamily. In terms of assembly, homodimer.

The protein resides in the cytoplasm. It catalyses the reaction tRNA(Pro) + L-proline + ATP = L-prolyl-tRNA(Pro) + AMP + diphosphate. Functionally, catalyzes the attachment of proline to tRNA(Pro) in a two-step reaction: proline is first activated by ATP to form Pro-AMP and then transferred to the acceptor end of tRNA(Pro). The polypeptide is Proline--tRNA ligase (Rickettsia rickettsii (strain Iowa)).